The following is a 340-amino-acid chain: tRNA N6-adenosine threonylcarbamoyltransferase (340 aa).

The Fe cation site is built by histidine 115 and histidine 119. Residues valine 138 to glycine 142, aspartate 171, glycine 184, aspartate 188, and asparagine 278 each bind substrate. Aspartate 306 is a Fe cation binding site.

This sequence belongs to the KAE1 / TsaD family. Fe(2+) is required as a cofactor.

Its subcellular location is the cytoplasm. It carries out the reaction L-threonylcarbamoyladenylate + adenosine(37) in tRNA = N(6)-L-threonylcarbamoyladenosine(37) in tRNA + AMP + H(+). Functionally, required for the formation of a threonylcarbamoyl group on adenosine at position 37 (t(6)A37) in tRNAs that read codons beginning with adenine. Is involved in the transfer of the threonylcarbamoyl moiety of threonylcarbamoyl-AMP (TC-AMP) to the N6 group of A37, together with TsaE and TsaB. TsaD likely plays a direct catalytic role in this reaction. This is tRNA N6-adenosine threonylcarbamoyltransferase from Clostridium botulinum (strain Hall / ATCC 3502 / NCTC 13319 / Type A).